Consider the following 146-residue polypeptide: Ribonuclease H (146 aa).

Residues 1–143 (MQKKIIVYTD…CDELARQAIK (143 aa)) enclose the RNase H type-1 domain. Mg(2+)-binding residues include Asp10, Glu48, Asp70, and Asp135.

This sequence belongs to the RNase H family. In terms of assembly, monomer. Requires Mg(2+) as cofactor.

Its subcellular location is the cytoplasm. It catalyses the reaction Endonucleolytic cleavage to 5'-phosphomonoester.. In terms of biological role, endonuclease that specifically degrades the RNA of RNA-DNA hybrids. The sequence is that of Ribonuclease H from Chlorobium phaeobacteroides (strain DSM 266 / SMG 266 / 2430).